The sequence spans 2006 residues: Supporter of activation of yellow protein (2006 aa).

Disordered regions lie at residues 1-208 (MNDL…RRVE), 313-347 (MPAKNDAHLSSLSPASASSSSASSSSSSSSSSSLA), 458-564 (EEKP…AQSQ), 744-794 (DTQD…DPAR), 821-916 (DLEG…KSRR), 929-1029 (VSVG…NNNS), 1044-1082 (CSSSSSTSSGAAANQQVIGGSGSSSMLPPTTILSSSDPL), and 1099-1196 (QQLR…SAVA). Residues 10 to 60 (VAATSSSGSESGTAVESAAATSTAGSAGAAGRPQSNCSANSNAKSVAASST) show a composition bias toward low complexity. The span at 67–81 (VSSTSSPAQRDQQLN) shows a compositional bias: polar residues. Residues 118–128 (SPPPTLPPPTT) are compositionally biased toward pro residues. Low complexity predominate over residues 129 to 168 (PCDDAPSTTGASASASSASGEAPSAASAAGAAGGPMAATA). A compositionally biased stretch (polar residues) spans 189–199 (ANPNSNANESQ). A compositionally biased stretch (low complexity) spans 321 to 347 (LSSLSPASASSSSASSSSSSSSSSSLA). Polar residues predominate over residues 485-494 (GGESNSSSQE). Residues 525–534 (SLSKEHDPKI) are compositionally biased toward basic and acidic residues. Positions 543–563 (ASNGIASGGSKASKASKSAQS) are enriched in low complexity. Basic and acidic residues predominate over residues 744–758 (DTQDNNNENHLKRTN). Composition is skewed to polar residues over residues 759-769 (SEGNESPSSRL) and 828-844 (PPTQQQSISTPDQNGAL). Residues 861-870 (PATPQPPPVA) show a composition bias toward pro residues. 2 stretches are compositionally biased toward basic and acidic residues: residues 936–945 (ADMKAKEKES) and 963–972 (ESPKTRDHRP). Low complexity-rich tracts occupy residues 978-990 (RTTTSTNTNLQPT) and 1018-1029 (SSESESNNNNNS). Residues 1053-1080 (GAAANQQVIGGSGSSSMLPPTTILSSSD) show a composition bias toward polar residues. The segment covering 1103–1112 (SSRPSSISCG) has biased composition (low complexity). Positions 1147–1158 (GRGRGRRSRGGR) are enriched in basic residues. Positions 1161–1173 (GSSSVDRAVSVGG) are enriched in low complexity. The SAY stretch occupies residues 1340–1573 (MIQEQVALYL…PPTDLMAQLL (234 aa)). The tract at residues 1579–1685 (AVGSDEIKTS…AGSEDEDGNE (107 aa)) is disordered. 2 stretches are compositionally biased toward low complexity: residues 1627-1652 (TASSSSTSSAQSVSSASSGNGSSSDT) and 1660-1677 (FSSTSSCSSSTGASSGAG). The PHD-type 1; degenerate zinc finger occupies 1694–1751 (TCGVCLRSQHRNARDMPEAFIRCYTCRKRVHPSCVDMPPRMVGRVRNYNWQCAGCKCC). A PHD-type 2; degenerate zinc finger spans residues 1753 to 1796 (KCRSSQRPGKMLYCEQCDRGYHIYCLGLRTVPDGRWSCERCCFC). Residues 1887–1911 (TSAQTDDSPMPSPGLTTNGGRALSP) are disordered.

Belongs to the SAYP family. As to expression, widely expressed. Highly expressed in ovary. Expressed in nursing cells and growing oocytes at all stages of development and accumulates in mature oocytes. Expressed in the nuclei of syncytium blastoderm of early embryos and in the nuclei of different tissues of late embryos, larvae, and adults.

It is found in the nucleus. Its subcellular location is the cytoplasm. It localises to the chromosome. Essential transcription regulator during early development. Coactivates transcription of some euchromatin genes and repress transcription in of euchromatin genes translocated to heterochromatin. In Drosophila melanogaster (Fruit fly), this protein is Supporter of activation of yellow protein (e(y)3).